We begin with the raw amino-acid sequence, 104 residues long: Large ribosomal subunit protein uL24 (104 aa).

It belongs to the universal ribosomal protein uL24 family. As to quaternary structure, part of the 50S ribosomal subunit.

Functionally, one of two assembly initiator proteins, it binds directly to the 5'-end of the 23S rRNA, where it nucleates assembly of the 50S subunit. In terms of biological role, one of the proteins that surrounds the polypeptide exit tunnel on the outside of the subunit. The polypeptide is Large ribosomal subunit protein uL24 (Pseudomonas savastanoi pv. phaseolicola (strain 1448A / Race 6) (Pseudomonas syringae pv. phaseolicola (strain 1448A / Race 6))).